Here is a 407-residue protein sequence, read N- to C-terminus: Phosphopentomutase (407 aa).

The Mn(2+) site is built by D10, D306, H311, D347, H348, and H359.

Belongs to the phosphopentomutase family. Mn(2+) serves as cofactor.

It is found in the cytoplasm. It catalyses the reaction 2-deoxy-alpha-D-ribose 1-phosphate = 2-deoxy-D-ribose 5-phosphate. The catalysed reaction is alpha-D-ribose 1-phosphate = D-ribose 5-phosphate. It functions in the pathway carbohydrate degradation; 2-deoxy-D-ribose 1-phosphate degradation; D-glyceraldehyde 3-phosphate and acetaldehyde from 2-deoxy-alpha-D-ribose 1-phosphate: step 1/2. In terms of biological role, isomerase that catalyzes the conversion of deoxy-ribose 1-phosphate (dRib-1-P) and ribose 1-phosphate (Rib-1-P) to deoxy-ribose 5-phosphate (dRib-5-P) and ribose 5-phosphate (Rib-5-P), respectively. The protein is Phosphopentomutase of Buchnera aphidicola subsp. Acyrthosiphon pisum (strain Tuc7).